A 436-amino-acid polypeptide reads, in one-letter code: MGQVLPLVTRQGDRIAIVSGLRTPFARQATAFHGIPAVDLGKMVVGELLARSEIPAEVIEQLVFGQVVQMPEAPNIAREIVLGTGMNVHTDAYSVSRACATSFQAVANVAESLMAGTIRAGIAGGADSSSVLPIGVSKKLARVLVDFNKARIMRQRLKLFSRLRLRDLMPVPPAVAEYSTGLRMGDTAEQMAKTYGITREQQDALAHRSHQRAAQAWSDGKLKEEVMTAFIPPYKQPLVEDNNIRGNSSLADYAKLRPAFDRKHGTVTAANSTPLTDGAAAVILMTESRAKELGLVPLGYLRSYAFTAIDVWQDMLLGPAWSTPLALERAGLTMSDLTLIDMHEAFAAQTLANIQLLGSERFARDVLGRAHATGEVDDSKFNVLGGSIAYGHPFAATGARMITQTLHELRRRGGGFGLVTACAAGGLGAAMVLEAE.

Cysteine 99 serves as the catalytic Acyl-thioester intermediate. Catalysis depends on proton acceptor residues histidine 392 and cysteine 422.

The protein belongs to the thiolase-like superfamily. Thiolase family. In terms of assembly, heterotetramer of two alpha chains (FadJ) and two beta chains (FadI).

Its subcellular location is the cytoplasm. It catalyses the reaction an acyl-CoA + acetyl-CoA = a 3-oxoacyl-CoA + CoA. Its pathway is lipid metabolism; fatty acid beta-oxidation. Its function is as follows. Catalyzes the final step of fatty acid oxidation in which acetyl-CoA is released and the CoA ester of a fatty acid two carbons shorter is formed. The polypeptide is 3-ketoacyl-CoA thiolase (Escherichia coli O9:H4 (strain HS)).